The chain runs to 322 residues: Phosphatidylglycerol--prolipoprotein diacylglyceryl transferase (322 aa).

A run of 3 helical transmembrane segments spans residues 23–43 (VYPI…AFFW), 53–73 (FFAL…LWFV), and 97–117 (GLSI…YIYF). Arginine 143 contacts a 1,2-diacyl-sn-glycero-3-phospho-(1'-sn-glycerol). Helical transmembrane passes span 191–211 (PLFL…VWII) and 250–270 (LAAM…EIWA).

This sequence belongs to the Lgt family.

The protein localises to the cell membrane. It carries out the reaction L-cysteinyl-[prolipoprotein] + a 1,2-diacyl-sn-glycero-3-phospho-(1'-sn-glycerol) = an S-1,2-diacyl-sn-glyceryl-L-cysteinyl-[prolipoprotein] + sn-glycerol 1-phosphate + H(+). It participates in protein modification; lipoprotein biosynthesis (diacylglyceryl transfer). Functionally, catalyzes the transfer of the diacylglyceryl group from phosphatidylglycerol to the sulfhydryl group of the N-terminal cysteine of a prolipoprotein, the first step in the formation of mature lipoproteins. In Mycoplasmopsis pulmonis (strain UAB CTIP) (Mycoplasma pulmonis), this protein is Phosphatidylglycerol--prolipoprotein diacylglyceryl transferase.